Reading from the N-terminus, the 352-residue chain is 2'-dehydrokanamycin reductase (352 aa).

This sequence belongs to the NAD(P)-dependent epimerase/dehydratase family.

The catalysed reaction is 2'-dehydrokanamycin A + NADPH + H(+) = kanamycin A + NADP(+). The protein operates within antibiotic biosynthesis; kanamycin biosynthesis. In terms of biological role, mediates the conversion of 2'-dehydrokanamycin A into kanamycin A. In Streptomyces kanamyceticus, this protein is 2'-dehydrokanamycin reductase (kanK).